A 76-amino-acid chain; its full sequence is MFTMKKSMLLLFFLGTISLSLCEEERSADEDDGEEEVKRSLFSIFKTAAKFVGKNLLKQAGKAGLETLACKAKNEC.

A signal peptide spans 1-22; sequence MFTMKKSMLLLFFLGTISLSLC. The propeptide at 23 to 37 is removed in mature form; the sequence is EEERSADEDDGEEEV. Cysteine 70 and cysteine 76 form a disulfide bridge.

Expressed by the skin glands.

It is found in the secreted. In terms of biological role, antimicrobial peptide active against a variety of Gram-positive and some Gram-negative bacterial strains. Has antifungal activity against a slime mold isolate. Has hemolytic activity against human erythrocytes. In Amolops chunganensis (Chungan torrent frog), this protein is Esculentin-2CG1.